The following is an 826-amino-acid chain: Putative ankyrin repeat protein RBE_0220 (826 aa).

ANK repeat units lie at residues 308–337, 342–371, 375–404, 445–474, 478–507, 512–541, 545–574, and 578–607; these read LGTS…DQHA, IDMS…DPNY, DNDT…DPNK, NDFT…DVNA, DGFT…NPDV, TKSS…NPNL, DGTT…DINK, and NGDN…DLKK.

The polypeptide is Putative ankyrin repeat protein RBE_0220 (Rickettsia bellii (strain RML369-C)).